Here is a 245-residue protein sequence, read N- to C-terminus: tRNA pseudouridine synthase A 2 (245 aa).

Asp53 functions as the Nucleophile in the catalytic mechanism. Tyr111 is a binding site for substrate.

It belongs to the tRNA pseudouridine synthase TruA family. As to quaternary structure, homodimer.

It carries out the reaction uridine(38/39/40) in tRNA = pseudouridine(38/39/40) in tRNA. Its function is as follows. Formation of pseudouridine at positions 38, 39 and 40 in the anticodon stem and loop of transfer RNAs. This Bacillus cereus (strain ATCC 14579 / DSM 31 / CCUG 7414 / JCM 2152 / NBRC 15305 / NCIMB 9373 / NCTC 2599 / NRRL B-3711) protein is tRNA pseudouridine synthase A 2.